The following is a 224-amino-acid chain: Protein YiiM (224 aa).

Residues 26–163 (IQVDGELMLT…VSADAPLELV (138 aa)) form the MOSC domain.

In terms of assembly, monomer.

This Escherichia coli (strain K12) protein is Protein YiiM (yiiM).